The chain runs to 906 residues: Protein translocase subunit SecA (906 aa).

ATP contacts are provided by residues glutamine 89, 107 to 111, and aspartate 502; that span reads GEGKT. Residues cysteine 890, cysteine 892, cysteine 901, and histidine 902 each contribute to the Zn(2+) site.

Belongs to the SecA family. As to quaternary structure, monomer and homodimer. Part of the essential Sec protein translocation apparatus which comprises SecA, SecYEG and auxiliary proteins SecDF-YajC and YidC. Zn(2+) is required as a cofactor.

It is found in the cell inner membrane. It localises to the cytoplasm. It catalyses the reaction ATP + H2O + cellular proteinSide 1 = ADP + phosphate + cellular proteinSide 2.. Part of the Sec protein translocase complex. Interacts with the SecYEG preprotein conducting channel. Has a central role in coupling the hydrolysis of ATP to the transfer of proteins into and across the cell membrane, serving both as a receptor for the preprotein-SecB complex and as an ATP-driven molecular motor driving the stepwise translocation of polypeptide chains across the membrane. This is Protein translocase subunit SecA from Brucella canis (strain ATCC 23365 / NCTC 10854 / RM-666).